A 313-amino-acid chain; its full sequence is tRNA dimethylallyltransferase (313 aa).

10-17 (GPTAVGKT) serves as a coordination point for ATP. Residue 12–17 (TAVGKT) participates in substrate binding. An interaction with substrate tRNA region spans residues 35 to 38 (DSMQ).

The protein belongs to the IPP transferase family. As to quaternary structure, monomer. It depends on Mg(2+) as a cofactor.

The catalysed reaction is adenosine(37) in tRNA + dimethylallyl diphosphate = N(6)-dimethylallyladenosine(37) in tRNA + diphosphate. In terms of biological role, catalyzes the transfer of a dimethylallyl group onto the adenine at position 37 in tRNAs that read codons beginning with uridine, leading to the formation of N6-(dimethylallyl)adenosine (i(6)A). This Alkaliphilus oremlandii (strain OhILAs) (Clostridium oremlandii (strain OhILAs)) protein is tRNA dimethylallyltransferase.